A 214-amino-acid polypeptide reads, in one-letter code: Thymidylate kinase (214 aa).

14–21 is an ATP binding site; sequence GLEGAGKT.

It belongs to the thymidylate kinase family.

The catalysed reaction is dTMP + ATP = dTDP + ADP. In terms of biological role, phosphorylation of dTMP to form dTDP in both de novo and salvage pathways of dTTP synthesis. In Mannheimia succiniciproducens (strain KCTC 0769BP / MBEL55E), this protein is Thymidylate kinase.